The primary structure comprises 1296 residues: Clustered mitochondria protein homolog (1296 aa).

Residues 1-31 (MTLMNGDGAHEHQAEAEPKQNGHEMGDQTEE) are disordered. Residues 8–26 (GAHEHQAEAEPKQNGHEMG) show a composition bias toward basic and acidic residues. A Clu domain is found at 333 to 575 (RAEDAYTSRL…RTFPPDLNFL (243 aa)). Positions 662-689 (LDGEAQLKQLEETMAAHKETVDTRSKEV) form a coiled coil. TPR repeat units lie at residues 970–1003 (AFHF…FNNV), 1012–1045 (CACL…SERI), 1096–1129 (ALLD…NSKY), and 1138–1171 (ALSH…YKNQ). Residues 1242–1274 (QKDLEHLKAEVQRRQQLQEAIKGAENHEAKTKE) adopt a coiled-coil conformation. The segment at 1261 to 1296 (AIKGAENHEAKTKEPEMSETSDSNINAASVAPESSD) is disordered. Over residues 1263–1276 (KGAENHEAKTKEPE) the composition is skewed to basic and acidic residues. Over residues 1278–1296 (SETSDSNINAASVAPESSD) the composition is skewed to polar residues.

This sequence belongs to the CLU family.

Its subcellular location is the cytoplasm. It localises to the cytoplasmic granule. In terms of biological role, mRNA-binding protein involved in proper cytoplasmic distribution of mitochondria. Specifically binds mRNAs of nuclear-encoded mitochondrial proteins in the cytoplasm and regulates transport or translation of these transcripts close to mitochondria, playing a role in mitochondrial biogenesis. The protein is Clustered mitochondria protein homolog of Xenopus tropicalis (Western clawed frog).